The chain runs to 324 residues: MESPNRTTIQEFIFSAFPYSWVKSVVCFVPLLFIYAFIVVGNLVIITVVQLNTHLHTPMYTFISALSFLEIWYTTATIPKMLSSLLSERSISFNGCLLQMYFFHSTGICEVCLLTVMAFDHYLAICSPLHYPSIMTPKLCTQLTLSCCVCGFITPLPEIAWISTLPFCGSNHLEHIFCDFLPVLRLACTDTRAIVMIQVVDVIHAVEIITAVMLIFMSYDGIVAVILRIHSAGGRRTAFSTCVSHFIVFSLFFGSVTLMYLRFSATYSLFWDIAIALAFAVLSPFFNPIIYSLRNKEIKEAIKKHIGQAKIFFSVRPGTSSKIF.

At 1–25 the chain is on the extracellular side; it reads MESPNRTTIQEFIFSAFPYSWVKSV. An N-linked (GlcNAc...) asparagine glycan is attached at Asn-5. A helical transmembrane segment spans residues 26-46; sequence VCFVPLLFIYAFIVVGNLVII. Residues 47 to 54 are Cytoplasmic-facing; it reads TVVQLNTH. The chain crosses the membrane as a helical span at residues 55 to 75; sequence LHTPMYTFISALSFLEIWYTT. Residues 76–98 are Extracellular-facing; that stretch reads ATIPKMLSSLLSERSISFNGCLL. Cys-96 and Cys-188 are oxidised to a cystine. The chain crosses the membrane as a helical span at residues 99–119; the sequence is QMYFFHSTGICEVCLLTVMAF. At 120–138 the chain is on the cytoplasmic side; that stretch reads DHYLAICSPLHYPSIMTPK. A helical transmembrane segment spans residues 139–159; sequence LCTQLTLSCCVCGFITPLPEI. The Extracellular segment spans residues 160-198; it reads AWISTLPFCGSNHLEHIFCDFLPVLRLACTDTRAIVMIQ. Residues 199-218 form a helical membrane-spanning segment; sequence VVDVIHAVEIITAVMLIFMS. At 219-238 the chain is on the cytoplasmic side; sequence YDGIVAVILRIHSAGGRRTA. Residues 239–259 traverse the membrane as a helical segment; the sequence is FSTCVSHFIVFSLFFGSVTLM. Topologically, residues 260–272 are extracellular; the sequence is YLRFSATYSLFWD. A helical transmembrane segment spans residues 273-293; it reads IAIALAFAVLSPFFNPIIYSL. Topologically, residues 294-324 are cytoplasmic; sequence RNKEIKEAIKKHIGQAKIFFSVRPGTSSKIF.

This sequence belongs to the G-protein coupled receptor 1 family.

It is found in the cell membrane. Odorant receptor. The sequence is that of Olfactory receptor 6K2 (OR6K2) from Homo sapiens (Human).